The following is a 675-amino-acid chain: MIKLIIDGSEIEISEGSTVYQACIQAGKQIPHFCYHARLKIAGNCRMCLVEIEKSQKPVASCAMPVSNGMVIHTDTSMVKKAREGVMEFLLINHPLDCPICDQGGECDLQDQAFRYGKGTNRFHENKRSIKDKYMGPLIKTAMTRCIQCTRCIRFANDIAGIEEIGAINRGEHMEVTSYLEQTLDSEISGNMIDICPVGALNSKPYAFKARKWELKHTASIGVHDAEGSNIRIDSRADEIMRILPSVNEAINEAWISDKNRFCYDGLKYQRLDHPYIRKNGKLVEVSWSEALKTIMDKIKSVKPEKIAAIAGSIVSVEAMFMLKILLQKLGSNNYTVNQFNYKIDTSERGNYLFNTTIVGVEKADLCLLIGANIRQIAPILNSRIGRRVRIGALKVVRIGIGHNQTYKIHDLGNDIKIIEDLAVGTHEYTKAFKEAKYPMIIVGDGVYGRDDGYALLSLIHKVVDKYNMMRDDWQGFNILHNHASIVGGLDIGFNTAIKFEGVKLAYLLGADAIPFDKLKSAFIIYQGHHGDVGAMSADVILPSAAYTEQSGIYVNLEGRPQIAQKAVSPVGRAKEDIEIIKEIAGYLKIDIGMDNLQEVRIRLAKEYNIFANIDKITANRFTQFISIDKLSQEPIAARPINYYMTDVISKNSVTMAKCVEAKEERKRDVAKVFY.

Residues 1-78 enclose the 2Fe-2S ferredoxin-type domain; that stretch reads MIKLIIDGSE…GMVIHTDTSM (78 aa). [2Fe-2S] cluster-binding residues include Cys34, Cys45, Cys48, and Cys62. Positions 78–117 constitute a 4Fe-4S His(Cys)3-ligated-type domain; the sequence is MVKKAREGVMEFLLINHPLDCPICDQGGECDLQDQAFRYG. Positions 94, 98, 101, 107, 146, 149, 152, and 196 each coordinate [4Fe-4S] cluster. In terms of domain architecture, 4Fe-4S Mo/W bis-MGD-type spans 215–271; sequence LKHTASIGVHDAEGSNIRIDSRADEIMRILPSVNEAINEAWISDKNRFCYDGLKYQR.

Belongs to the complex I 75 kDa subunit family. Requires [2Fe-2S] cluster as cofactor. The cofactor is [4Fe-4S] cluster.

It catalyses the reaction a quinone + NADH + 5 H(+)(in) = a quinol + NAD(+) + 4 H(+)(out). In terms of biological role, NDH-1 shuttles electrons from NADH, via FMN and iron-sulfur (Fe-S) centers, to quinones in the respiratory chain. Couples the redox reaction to proton translocation (for every two electrons transferred, four hydrogen ions are translocated across the cytoplasmic membrane), and thus conserves the redox energy in a proton gradient. The sequence is that of NADH-quinone oxidoreductase subunit G (nuoG) from Rickettsia typhi (strain ATCC VR-144 / Wilmington).